An 87-amino-acid chain; its full sequence is Large ribosomal subunit protein bL31B (87 aa).

It belongs to the bacterial ribosomal protein bL31 family. Type B subfamily. Part of the 50S ribosomal subunit.

The chain is Large ribosomal subunit protein bL31B from Pseudomonas paraeruginosa (strain DSM 24068 / PA7) (Pseudomonas aeruginosa (strain PA7)).